The sequence spans 566 residues: Viral IRF3-like protein (566 aa).

Disordered regions lie at residues 151–170 and 176–236; these read PRPF…PAFC and QTGA…VHTD.

The protein belongs to the IRF family. Interacts with host SKP2. Interacts with host USP7.

Its function is as follows. Plays a role in the inhibition of host immune response. Interferes with the transactivating potential of cellular IRFs IRF3 and IRF7 that play a critical role in the induction of IFNA and IFNB genes. Additionally, interferes with surface major histocompatibility complex class II (MHC-II) antigen presentation. The chain is Viral IRF3-like protein (vIRF-3) from Human herpesvirus 8 type P (isolate GK18) (HHV-8).